The primary structure comprises 394 residues: Chaperone protein DnaJ (394 aa).

One can recognise a J domain in the interval 4 to 68; that stretch reads DYYEILGVSR…ELRARYDRFG (65 aa). The CR-type zinc-finger motif lies at 136–218; it reads GGEKQIRISH…CNGEGLAQTT (83 aa). Zn(2+) is bound by residues cysteine 149, cysteine 152, cysteine 166, cysteine 169, cysteine 192, cysteine 195, cysteine 206, and cysteine 209. CXXCXGXG motif repeat units lie at residues 149-156, 166-173, 192-199, and 206-213; these read CPVCGGSG, CPTCGGAG, and CYNCNGEG.

It belongs to the DnaJ family. As to quaternary structure, homodimer. The cofactor is Zn(2+).

Its subcellular location is the cytoplasm. Its function is as follows. Participates actively in the response to hyperosmotic and heat shock by preventing the aggregation of stress-denatured proteins and by disaggregating proteins, also in an autonomous, DnaK-independent fashion. Unfolded proteins bind initially to DnaJ; upon interaction with the DnaJ-bound protein, DnaK hydrolyzes its bound ATP, resulting in the formation of a stable complex. GrpE releases ADP from DnaK; ATP binding to DnaK triggers the release of the substrate protein, thus completing the reaction cycle. Several rounds of ATP-dependent interactions between DnaJ, DnaK and GrpE are required for fully efficient folding. Also involved, together with DnaK and GrpE, in the DNA replication of plasmids through activation of initiation proteins. The protein is Chaperone protein DnaJ of Synechococcus sp. (strain JA-3-3Ab) (Cyanobacteria bacterium Yellowstone A-Prime).